The chain runs to 609 residues: Glutamine--fructose-6-phosphate aminotransferase [isomerizing] (609 aa).

Residue Cys2 is the Nucleophile; for GATase activity of the active site. The 216-residue stretch at 2–217 (CGIVGYIGRR…EGWLAELTPE (216 aa)) folds into the Glutamine amidotransferase type-2 domain. SIS domains lie at 286–425 (SAAE…QNGR) and 458–599 (AAEA…VDKP). Lys604 (for Fru-6P isomerization activity) is an active-site residue.

Homodimer.

The protein localises to the cytoplasm. The catalysed reaction is D-fructose 6-phosphate + L-glutamine = D-glucosamine 6-phosphate + L-glutamate. In terms of biological role, catalyzes the first step in hexosamine metabolism, converting fructose-6P into glucosamine-6P using glutamine as a nitrogen source. This Symbiobacterium thermophilum (strain DSM 24528 / JCM 14929 / IAM 14863 / T) protein is Glutamine--fructose-6-phosphate aminotransferase [isomerizing].